The chain runs to 385 residues: Probable caffeine synthase 4 (385 aa).

S-adenosyl-L-homocysteine is bound by residues Tyr18, Cys62, Asn67, Asp101, Leu102, Ser140, and Phe141. Caffeine contacts are provided by Tyr158, Gln161, and Phe162. Asn179 contributes to the Mg(2+) binding site. Thr238 serves as a coordination point for caffeine. Residues Asp261, Phe263, and Asn264 each contribute to the Mg(2+) site. Tyr369 serves as a coordination point for caffeine.

The protein belongs to the methyltransferase superfamily. Type-7 methyltransferase family. The cofactor is Mg(2+). In terms of tissue distribution, expressed in roots, stems, young and old leaves.

It participates in alkaloid biosynthesis. Its function is as follows. May be involved in the biosynthesis of caffeine. The sequence is that of Probable caffeine synthase 4 from Coffea arabica (Arabian coffee).